Reading from the N-terminus, the 71-residue chain is Phosphatidylinositol N-acetylglucosaminyltransferase subunit Y (71 aa).

Residue Met1 is a topological domain, cytoplasmic. Residues 2-21 (FFSLPVLTVLIPLVSLTGLL) traverse the membrane as a helical segment. The Lumenal portion of the chain corresponds to 22–44 (YSASVEEDFPNGCTSTASLCFYS). A helical membrane pass occupies residues 45–65 (LLLPITLPVYVFFHLWTWMGL). The Cytoplasmic segment spans residues 66-71 (KLFRHN).

As to quaternary structure, component of the glycosylphosphatidylinositol-N-acetylglucosaminyltransferase (GPI-GnT) complex composed at least by PIGA, PIGC, PIGH, PIGP, PIGQ, PIGY and DPM2.

It is found in the endoplasmic reticulum membrane. Its pathway is glycolipid biosynthesis; glycosylphosphatidylinositol-anchor biosynthesis. Its function is as follows. Part of the glycosylphosphatidylinositol-N-acetylglucosaminyltransferase (GPI-GnT) complex that catalyzes the transfer of N-acetylglucosamine from UDP-N-acetylglucosamine to phosphatidylinositol and participates in the first step of GPI biosynthesis. May act by regulating the catalytic subunit PIGA. The protein is Phosphatidylinositol N-acetylglucosaminyltransferase subunit Y of Xenopus tropicalis (Western clawed frog).